We begin with the raw amino-acid sequence, 1161 residues long: Cell wall protein DAN4 (1161 aa).

A signal peptide spans 1-19; sequence MVNISIVAGIVALATSAAA. Disordered stretches follow at residues 123 to 309, 326 to 345, 354 to 547, and 691 to 713; these read TSTS…SASS, TPAT…STTN, TTTS…SSFG, and STDS…SSTA. The interval 134–286 is 46 X 3 AA tandem repeats of T-[SP]-T; it reads TSTTPTTTIT…TTSTTSTTST (153 aa). Residues 354 to 372 show a composition bias toward low complexity; it reads TTTSDTYISSSSPSQVTSS. 14 consecutive repeat copies span residues 373-384, 385-396, 397-408, 409-420, 421-432, 433-444, 445-456, 457-468, 469-480, 481-492, 493-504, 505-516, 517-528, and 529-540. The segment at 373–540 is 14 X 12 AA approximate tandem repeats; it reads AEPTTVSEVT…PIRSSQVTTT (168 aa). A compositionally biased stretch (polar residues) spans 373-547; the sequence is AEPTTVSEVT…TTTEPVSSFG (175 aa). 2 repeat units span residues 826–913 and 914–1001. A 2.5 X 88 AA approximate tandem repeats region spans residues 826-1040; sequence EDSVLTKTQV…SPVSSFNSKA (215 aa). Residues 1002 to 1040 form a 2-3; truncated repeat; that stretch reads EDVASTKTELLTMETTITSCSGGICTTLMSPVSSFNSKA. Asn-1137 carries the GPI-anchor amidated asparagine lipid modification. The propeptide at 1138–1161 is removed in mature form; sequence GAYNFDKDNIFGTAIVAVVALLLL.

Belongs to the SRP1/TIP1 family. Post-translationally, extensively O-glycosylated. In terms of processing, the GPI-anchor is attached to the protein in the endoplasmic reticulum and serves to target the protein to the cell surface. There, the glucosamine-inositol phospholipid moiety is cleaved off and the GPI-modified mannoprotein is covalently attached via its lipidless GPI glycan remnant to the 1,6-beta-glucan of the outer cell wall layer.

It localises to the secreted. Its subcellular location is the cell wall. It is found in the cell membrane. Its function is as follows. Component of the cell wall. This is Cell wall protein DAN4 from Saccharomyces cerevisiae (strain ATCC 204508 / S288c) (Baker's yeast).